Reading from the N-terminus, the 273-residue chain is 3-methyl-2-oxobutanoate hydroxymethyltransferase (273 aa).

D53 and D92 together coordinate Mg(2+). Residues D53–S54, D92, and K120 contribute to the 3-methyl-2-oxobutanoate site. E122 contributes to the Mg(2+) binding site. Catalysis depends on E189, which acts as the Proton acceptor.

Belongs to the PanB family. Homodecamer; pentamer of dimers. Mg(2+) serves as cofactor.

It is found in the cytoplasm. It catalyses the reaction 3-methyl-2-oxobutanoate + (6R)-5,10-methylene-5,6,7,8-tetrahydrofolate + H2O = 2-dehydropantoate + (6S)-5,6,7,8-tetrahydrofolate. It participates in cofactor biosynthesis; (R)-pantothenate biosynthesis; (R)-pantoate from 3-methyl-2-oxobutanoate: step 1/2. Its function is as follows. Catalyzes the reversible reaction in which hydroxymethyl group from 5,10-methylenetetrahydrofolate is transferred onto alpha-ketoisovalerate to form ketopantoate. In Cupriavidus taiwanensis (strain DSM 17343 / BCRC 17206 / CCUG 44338 / CIP 107171 / LMG 19424 / R1) (Ralstonia taiwanensis (strain LMG 19424)), this protein is 3-methyl-2-oxobutanoate hydroxymethyltransferase.